We begin with the raw amino-acid sequence, 220 residues long: Botcinic acid biosynthesis cluster B protein 12 (220 aa).

It functions in the pathway polyketide biosynthesis. Its function is as follows. Part of the gene cluster B that mediates the biosynthesis of botcinic acid and its botcinin derivatives, acetate-derived polyketides that contribute to virulence when combined with the sesquiterpene botrydial. Botcinic acid and its derivatives have been shown to induce chlorosis and necrosis during host plant infection, but also have antifungal activities. Two polyketide synthases, BOA6 and BOA9, are involved in the biosynthesis of botcinins. BOA6 mediates the formation of the per-methylated tetraketide core by condensation of four units of malonyl-CoA with one unit of acetyl-CoA, which would be methylated in activated methylene groups to yield a bicyclic acid intermediate that could then either be converted to botrylactone derivatives or lose the starter acetate unit through a retro-Claisen type C-C bond cleavage to yield botcinin derivatives. The second polyketide synthase, BOA9, is probably required for the biosynthesis of the tetraketide side chain of botcinins. The methyltransferase (MT) domain within BOA6 is probably responsible for the incorporation of four methyl groups. The trans-enoyl reductase BOA5 might take over the enoyl reductase function of BOA6 that misses an ER domain. The monooxygenases BOA2, BOA3 and BOA4 might be involved in further hydroxylations at C4, C5 and C8, whereas BOA7, close to BOA9, could potentially be involved in the hydroxylation at C4 in the side chain of botcinins. The sequence is that of Botcinic acid biosynthesis cluster B protein 12 from Botryotinia fuckeliana (strain B05.10) (Noble rot fungus).